The sequence spans 63 residues: Beta-defensin 3 (63 aa).

Positions 1 to 20 (MRIHYLLFAFLLVLLSPPAA) are cleaved as a signal peptide. A propeptide spanning residues 21–22 (FS) is cleaved from the precursor. Cystine bridges form between Cys31/Cys59, Cys38/Cys52, and Cys42/Cys60.

It belongs to the beta-defensin family. LAP/TAP subfamily. As to expression, highest expression in salivary glands, epididymis, ovary and pancreas and to a lesser extent in lung, liver and brain. Low or no expression in skeletal muscle and tongue.

It is found in the secreted. Functionally, antimicrobial activity against Gram-negative bacteria E.coli and P.aeruginosa. In Mus musculus (Mouse), this protein is Beta-defensin 3 (Defb3).